The chain runs to 389 residues: bZIP transcription factor 68 (389 aa).

A compositionally biased stretch (basic and acidic residues) spans 1-16; the sequence is MGSSEMEKSGKEKEPK. Disordered regions lie at residues 1 to 42, 124 to 154, 170 to 236, 285 to 318, and 356 to 389; these read MGSS…VSAG, MAEA…KRSK, AGKN…NLPV, QPWL…RKQA, and SSLK…QDVA. The span at 19–32 shows a compositional bias: low complexity; the sequence is PPSTSSSAPATVVS. The segment covering 137 to 149 has biased composition (basic and acidic residues); it reads GDGKPSDGKEKLP. Lys154 is covalently cross-linked (Glycyl lysine isopeptide (Lys-Gly) (interchain with G-Cter in ubiquitin)). Positions 170–205 are enriched in low complexity; that stretch reads AGKNSGASANGACSKSAESGSDGSSDGSDANSQNDS. Basic and acidic residues-rich tracts occupy residues 206–215 and 304–318; these read GSRHNGKDGE and SNRE…RKQA. A bZIP domain is found at 295-358; the sequence is EIKRQRRKQS…EELLAENSSL (64 aa). Residues 297–316 are basic motif; it reads KRQRRKQSNRESARRSRLRK. The leucine-zipper stretch occupies residues 323–358; that stretch reads LAQRAEVLNGENSSLRAEINKLKSQYEELLAENSSL. Over residues 356–366 the composition is skewed to polar residues; it reads SSLKNKFSSAP. Residues 372–389 show a composition bias toward basic and acidic residues; the sequence is DLDKNEQEPQRSTRQDVA.

It belongs to the bZIP family. As to quaternary structure, monomer, homodimer and heterodimers with GBF1/BZIP41, GBF2/BZIP54 and GBF3/BZIP55. Heterodimers with BZIP16. Interacts with GIP1.

It is found in the nucleus. Its function is as follows. Transcriptional activator that binds to the G-box motif (5'-CACGTG-3') and other cis-acting elements with 5'-ACGT-3' core, such as Hex, C-box and as-1 motifs. Possesses high binding affinity to G-box, much lower affinity to Hex and C-box, and little affinity to as-1 element. G-box and G-box-like motifs are cis-acting elements defined in promoters of certain plant genes which are regulated by such diverse stimuli as light-induction or hormone control. Binds to the G-box motif 5'-CACGTG-3' of LHCB2.4 (At3g27690) promoter. May act as transcriptional activator in light-regulated expression of LHCB2.4. Probably binds DNA as monomer. DNA-binding activity is redox-dependent. The sequence is that of bZIP transcription factor 68 from Arabidopsis thaliana (Mouse-ear cress).